A 540-amino-acid polypeptide reads, in one-letter code: Coiled-coil domain-containing protein 116 (540 aa).

Positions 79–102 form a coiled coil; sequence QVLDSLQTVVEQATECVATMKTEA. The tract at residues 347–400 is disordered; sequence PGNSDLQPSSKASLPTDREARGETCYSPTSASSPKTSHRKSKDRRGSPSNAVQM. Composition is skewed to polar residues over residues 350 to 359 and 372 to 381; these read SDLQPSSKAS and YSPTSASSPK. Ser393 is modified (phosphoserine).

It is found in the cytoplasm. It localises to the cytoskeleton. The protein localises to the microtubule organizing center. Its subcellular location is the centrosome. This is Coiled-coil domain-containing protein 116 (Ccdc116) from Rattus norvegicus (Rat).